The chain runs to 985 residues: Probable oxidoreductase YjgC (985 aa).

Residues 3–79 enclose the 2Fe-2S ferredoxin-type domain; it reads GKKTITINGV…GDVIDTLSPD (77 aa). [2Fe-2S] cluster contacts are provided by Cys37, Cys48, Cys51, and Cys63. The 4Fe-4S His(Cys)3-ligated-type domain maps to 79–119; that stretch reads DVKKAQVIGMDKILYNHELYCTVCDYNNGGCEIHNTVKEMK. Residues His95, Cys99, Cys102, Cys109, Cys148, Cys151, Cys154, Cys158, Cys191, Cys194, Cys197, Cys201, Cys265, Cys268, Cys272, and Cys300 each coordinate [4Fe-4S] cluster. 2 4Fe-4S ferredoxin-type domains span residues 139 to 170 and 182 to 211; these read PFYR…LTID and NDVP…EKGM. Residues 258 to 314 form the 4Fe-4S Mo/W bis-MGD-type domain; that stretch reads IKKTKTVCTYCGVGCSFDVWTKGRDILKVEPQEEAPANGISTCVKGKFGWDFVNSEE.

This sequence in the C-terminal section; belongs to the prokaryotic molybdopterin-containing oxidoreductase family. Requires [2Fe-2S] cluster as cofactor. [4Fe-4S] cluster is required as a cofactor. Mo-bis(molybdopterin guanine dinucleotide) serves as cofactor.

The sequence is that of Probable oxidoreductase YjgC (yjgC) from Bacillus subtilis (strain 168).